We begin with the raw amino-acid sequence, 141 residues long: Nucleoside diphosphate kinase (141 aa).

ATP is bound by residues Lys-11, Phe-59, Arg-87, Thr-93, Arg-104, and Asn-114. The active-site Pros-phosphohistidine intermediate is the His-117.

This sequence belongs to the NDK family. In terms of assembly, homotetramer. The cofactor is Mg(2+).

It is found in the cytoplasm. It catalyses the reaction a 2'-deoxyribonucleoside 5'-diphosphate + ATP = a 2'-deoxyribonucleoside 5'-triphosphate + ADP. The catalysed reaction is a ribonucleoside 5'-diphosphate + ATP = a ribonucleoside 5'-triphosphate + ADP. Functionally, major role in the synthesis of nucleoside triphosphates other than ATP. The ATP gamma phosphate is transferred to the NDP beta phosphate via a ping-pong mechanism, using a phosphorylated active-site intermediate. The chain is Nucleoside diphosphate kinase from Pseudomonas syringae pv. tomato (strain ATCC BAA-871 / DC3000).